We begin with the raw amino-acid sequence, 291 residues long: Undecaprenyl-diphosphatase (291 aa).

The next 8 helical transmembrane spans lie at 1–21, 48–68, 102–122, 126–146, 162–182, 203–223, 236–256, and 267–287; these read MFIIELIKGIILGVVEGLTEF, SAFTFKIVIQLGSVFAAAWVF, LHVLVGMVPAGILGLLFDDFI, LFSVPTVMIGLFVGAIYMIIA, INYFQAFVIGISQAVAMWPGF, SDFTFIMAVPIMLAASGLSLL, FYILGFLAAFTVGLIAIKTFL, and FAIYRIVLVIFIAILYFGFGI.

It belongs to the UppP family.

It is found in the cell membrane. It catalyses the reaction di-trans,octa-cis-undecaprenyl diphosphate + H2O = di-trans,octa-cis-undecaprenyl phosphate + phosphate + H(+). Functionally, catalyzes the dephosphorylation of undecaprenyl diphosphate (UPP). Confers resistance to bacitracin. The chain is Undecaprenyl-diphosphatase from Staphylococcus aureus (strain MSSA476).